Reading from the N-terminus, the 190-residue chain is Corticoliberin (190 aa).

The N-terminal stretch at 1 to 24 (MRLRLLVSVGVLLVALLPSPPCRA) is a signal peptide. A propeptide spanning residues 25 to 147 (LLSRGPIPGA…QEAPAARKRR (123 aa)) is cleaved from the precursor. 2 disordered regions span residues 33-57 (GARQ…QEPQ) and 116-151 (RRPF…SQEP). Alanine 188 carries the alanine amide modification.

It belongs to the sauvagine/corticotropin-releasing factor/urotensin I family. In terms of assembly, interacts (via C-terminus) with CRFR1 (via N-terminal extracellular domain). As to expression, produced by the hypothalamus.

It is found in the secreted. Its function is as follows. Hormone regulating the release of corticotropin from pituitary gland. Induces NLRP6 in intestinal epithelial cells, hence may influence gut microbiota profile. In Bos taurus (Bovine), this protein is Corticoliberin (CRH).